The primary structure comprises 1379 residues: Partitioning defective protein 3 (1379 aa).

Over residues 1-23 (MSASSTSSSSTSCPEGGEPSGSC) the composition is skewed to low complexity. Disordered regions lie at residues 1–32 (MSASSTSSSSTSCPEGGEPSGSCKSSDEGEST) and 208–335 (YNVG…SDRK). 2 stretches are compositionally biased toward polar residues: residues 239-256 (SFDQIPQSGLRVSTPKPS) and 272-284 (ILRSSLRTEASGS). Composition is skewed to basic and acidic residues over residues 302-315 (EVEKKLAEQDERKS) and 322-335 (DKNPGRFARGSDRK). PDZ domains are found at residues 381–483 (LVTF…IINR) and 515–599 (VVEL…SRVS). A coiled-coil region spans residues 606-626 (TSASSENKENEETLKVVEEEK). One can recognise a PDZ 3 domain in the interval 659–750 (VIPFINGSSS…EVGMISSNVR (92 aa)). 5 disordered regions span residues 767–873 (DLSR…MGAA), 887–918 (HQRQNSAPTSSTQKRSKSQPRSSSQRNYRSPM), 949–1085 (QSME…GGNV), 1273–1301 (VEPVSGSSASATDRRGRSTSSGAVASGSS), and 1350–1379 (AYETRGGGAGGSPSQYRRRDQGPPHRFPQY). Composition is skewed to low complexity over residues 776–786 (SSPSPSSRMSS) and 798–826 (ATRGTSSSGADSSHSRQSSASSAVPAVPA). 2 stretches are compositionally biased toward basic and acidic residues: residues 828-844 (LTERDSIVSDGTSRNDE) and 854-869 (FNREGLGRKSLSEKRG). Residues 894 to 912 (PTSSTQKRSKSQPRSSSQR) show a composition bias toward low complexity. Residues 967 to 977 (QIPTGSSSKVQ) show a composition bias toward polar residues. 2 stretches are compositionally biased toward basic and acidic residues: residues 1030–1040 (KSRDASPEKTP) and 1048–1060 (SVERPKSIIDERN). Over residues 1290–1301 (STSSGAVASGSS) the composition is skewed to low complexity.

The protein belongs to the PAR3 family. In terms of assembly, required, together with pkc-3, for the localization of par-6; par-6 is involved in localizing/maintaining par-3 at the cell periphery. Interacts with par-6 and pkc-3 for localization at the periphery of anterior cortex of the embryo. Asymmetrically distributed at the periphery of the zygote and in dividing blastomeres of the germline lineage. Coexpressed with par-6; patchy expression observed at the periphery after completion of meiosis I and in meiosis II. On completion of metaphase II, expression is restricted to the anterior 85% of embryo length; this decreases to 55% in embryos between prophase and telophase of the first mitosis. During the first cleavage, expression is detected in the advancing furrow. Transiently coexpressed and colocalized asymmetrically with par-6 and pkc-3, in the developing somatic gonad, including the spermathecal precursor cells of L4 larvae.

Its subcellular location is the cytoplasm. In cooperation with pkc-3, required for establishing cell polarity and regulating spindle orientation in the early embryo. Localization is crucial for recruiting par-6 and pkc-3 to the peripheral apical cortex and restricting par-2 to basolateral surfaces. Necessary for apicobasal and anterior-posterior asymmetries associated with cell adhesion and gastrulation during the first few cycles of embryogenesis, and also for epithelial cell polarity in the distal spermatheca. Regulates the asymmetric localization of csnk-1, ppk-1 and gpr-1/2 during the first embryonic division. In Caenorhabditis elegans, this protein is Partitioning defective protein 3.